Consider the following 60-residue polypeptide: UPF0337 protein asr1134 (60 aa).

Basic and acidic residues-rich tracts occupy residues 1 to 18 (MSLE…EGKA) and 29 to 60 (PEDK…KKID). The segment at 1-60 (MSLEDRAKATGKNIEGKAQEALGNVTGDPEDKAEGKAKQAESEVRHGVEDVKDNVKKKID) is disordered.

The protein belongs to the UPF0337 (CsbD) family.

The chain is UPF0337 protein asr1134 from Nostoc sp. (strain PCC 7120 / SAG 25.82 / UTEX 2576).